The primary structure comprises 44 residues: Photosystem I reaction center subunit IX (44 aa).

A helical transmembrane segment spans residues 7-27 (YLSVAPVVSTLWFAALAGLLI).

It belongs to the PsaJ family.

The protein resides in the plastid. The protein localises to the chloroplast thylakoid membrane. Functionally, may help in the organization of the PsaE and PsaF subunits. The chain is Photosystem I reaction center subunit IX from Lotus japonicus (Lotus corniculatus var. japonicus).